The chain runs to 115 residues: NAD(P)H-quinone oxidoreductase subunit M (115 aa).

Belongs to the complex I NdhM subunit family. NDH-1 can be composed of about 15 different subunits; different subcomplexes with different compositions have been identified which probably have different functions.

It is found in the cellular thylakoid membrane. It catalyses the reaction a plastoquinone + NADH + (n+1) H(+)(in) = a plastoquinol + NAD(+) + n H(+)(out). The enzyme catalyses a plastoquinone + NADPH + (n+1) H(+)(in) = a plastoquinol + NADP(+) + n H(+)(out). Functionally, NDH-1 shuttles electrons from an unknown electron donor, via FMN and iron-sulfur (Fe-S) centers, to quinones in the respiratory and/or the photosynthetic chain. The immediate electron acceptor for the enzyme in this species is believed to be plastoquinone. Couples the redox reaction to proton translocation, and thus conserves the redox energy in a proton gradient. Cyanobacterial NDH-1 also plays a role in inorganic carbon-concentration. The chain is NAD(P)H-quinone oxidoreductase subunit M from Synechococcus sp. (strain WH7803).